The sequence spans 398 residues: MSISIAAIILAAGRGERAGSPHKIPKQYRLLGKKPIIYHTVCRFLRHPAITTIILVIHPEDRQICEQALAEFKERFIIVEGGSTRQISTLHGLQALKKFNPQYVHIHDGARPFIENELLDNIHNTLTPQEGVLPVLPISDTLKRVNHQYVLETIPRTHLYSAQTPQCFPFEPILAAHKQAKRVCKEDFTDDCAIAEWFGLPMRTIPGDPHNIKITWHKDFDTAHLYLQKKMQMFPDIRVGNGYDVHSFEEGDFLILCGIRIPFHKKLNGHSDADVALHALTDALLATRGAGDIGTHFPPSDPQWKNVSSEIFLRHALSLLKQAGGRIANVDITVIAENPKIGPYRHAMIENLMTILAITPDRISIKATTNERLGFIGRGEGIAALATASVLYPGEIPQ.

The interval 1–237 (MSISIAAIIL…QKKMQMFPDI (237 aa)) is 2-C-methyl-D-erythritol 4-phosphate cytidylyltransferase. The tract at residues 238–398 (RVGNGYDVHS…SVLYPGEIPQ (161 aa)) is 2-C-methyl-D-erythritol 2,4-cyclodiphosphate synthase. A divalent metal cation-binding residues include Asp244 and His246. Residues 244–246 (DVH) and 270–271 (HS) each bind 4-CDP-2-C-methyl-D-erythritol 2-phosphate. Residue His278 coordinates a divalent metal cation. 4-CDP-2-C-methyl-D-erythritol 2-phosphate is bound by residues 292-294 (DIG), 368-371 (TTNE), Phe375, and Arg378.

It in the N-terminal section; belongs to the IspD/TarI cytidylyltransferase family. IspD subfamily. This sequence in the C-terminal section; belongs to the IspF family. A divalent metal cation is required as a cofactor.

It carries out the reaction 2-C-methyl-D-erythritol 4-phosphate + CTP + H(+) = 4-CDP-2-C-methyl-D-erythritol + diphosphate. The enzyme catalyses 4-CDP-2-C-methyl-D-erythritol 2-phosphate = 2-C-methyl-D-erythritol 2,4-cyclic diphosphate + CMP. It functions in the pathway isoprenoid biosynthesis; isopentenyl diphosphate biosynthesis via DXP pathway; isopentenyl diphosphate from 1-deoxy-D-xylulose 5-phosphate: step 2/6. It participates in isoprenoid biosynthesis; isopentenyl diphosphate biosynthesis via DXP pathway; isopentenyl diphosphate from 1-deoxy-D-xylulose 5-phosphate: step 4/6. Functionally, bifunctional enzyme that catalyzes the formation of 4-diphosphocytidyl-2-C-methyl-D-erythritol from CTP and 2-C-methyl-D-erythritol 4-phosphate (MEP) (IspD), and catalyzes the conversion of 4-diphosphocytidyl-2-C-methyl-D-erythritol 2-phosphate (CDP-ME2P) to 2-C-methyl-D-erythritol 2,4-cyclodiphosphate (ME-CPP) with a corresponding release of cytidine 5-monophosphate (CMP) (IspF). In Bartonella tribocorum (strain CIP 105476 / IBS 506), this protein is Bifunctional enzyme IspD/IspF.